A 558-amino-acid polypeptide reads, in one-letter code: Proline--tRNA ligase (558 aa).

It belongs to the class-II aminoacyl-tRNA synthetase family. ProS type 1 subfamily. In terms of assembly, homodimer.

It localises to the cytoplasm. It carries out the reaction tRNA(Pro) + L-proline + ATP = L-prolyl-tRNA(Pro) + AMP + diphosphate. Functionally, catalyzes the attachment of proline to tRNA(Pro) in a two-step reaction: proline is first activated by ATP to form Pro-AMP and then transferred to the acceptor end of tRNA(Pro). As ProRS can inadvertently accommodate and process non-cognate amino acids such as alanine and cysteine, to avoid such errors it has two additional distinct editing activities against alanine. One activity is designated as 'pretransfer' editing and involves the tRNA(Pro)-independent hydrolysis of activated Ala-AMP. The other activity is designated 'posttransfer' editing and involves deacylation of mischarged Ala-tRNA(Pro). The misacylated Cys-tRNA(Pro) is not edited by ProRS. This is Proline--tRNA ligase from Coprothermobacter proteolyticus (strain ATCC 35245 / DSM 5265 / OCM 4 / BT).